A 171-amino-acid polypeptide reads, in one-letter code: Adenine phosphoribosyltransferase (171 aa).

This sequence belongs to the purine/pyrimidine phosphoribosyltransferase family. Homodimer.

It is found in the cytoplasm. It carries out the reaction AMP + diphosphate = 5-phospho-alpha-D-ribose 1-diphosphate + adenine. Its pathway is purine metabolism; AMP biosynthesis via salvage pathway; AMP from adenine: step 1/1. Functionally, catalyzes a salvage reaction resulting in the formation of AMP, that is energically less costly than de novo synthesis. In Nitrosococcus oceani (strain ATCC 19707 / BCRC 17464 / JCM 30415 / NCIMB 11848 / C-107), this protein is Adenine phosphoribosyltransferase.